A 407-amino-acid chain; its full sequence is Argininosuccinate synthase (407 aa).

10 to 18 (AYSGGLDTS) lines the ATP pocket. The L-citrulline site is built by Tyr88 and Ser93. Gly118 is an ATP binding site. L-aspartate-binding residues include Thr120, Asn124, and Asp125. Asn124 lines the L-citrulline pocket. The L-citrulline site is built by Arg128, Ser177, Ser186, Glu263, and Tyr275.

The protein belongs to the argininosuccinate synthase family. Type 1 subfamily. In terms of assembly, homotetramer.

It is found in the cytoplasm. It catalyses the reaction L-citrulline + L-aspartate + ATP = 2-(N(omega)-L-arginino)succinate + AMP + diphosphate + H(+). The protein operates within amino-acid biosynthesis; L-arginine biosynthesis; L-arginine from L-ornithine and carbamoyl phosphate: step 2/3. The chain is Argininosuccinate synthase from Clostridium botulinum (strain Alaska E43 / Type E3).